We begin with the raw amino-acid sequence, 608 residues long: Albumin 1 (608 aa).

Residues 1 to 14 (MQWLSVCSLLVLLS) form the signal peptide. A propeptide spanning residues 15-18 (VLSR) is cleaved from the precursor. 3 consecutive Albumin domains span residues 19–205 (SQAQ…TFQH), 206–398 (AVMK…AGSD), and 402–600 (KITD…KLVS). 18 cysteine pairs are disulfide-bonded: Cys26–Cys72, Cys71–Cys80, Cys93–Cys108, Cys107–Cys118, Cys142–Cys187, Cys186–Cys195, Cys218–Cys264, Cys263–Cys271, Cys283–Cys299, Cys298–Cys309, Cys336–Cys381, Cys380–Cys389, Cys414–Cys460, Cys459–Cys471, Cys484–Cys500, Cys499–Cys510, Cys537–Cys582, and Cys581–Cys590. Asn501 carries an N-linked (GlcNAc...) asparagine glycan.

This sequence belongs to the ALB/AFP/VDB family. In terms of tissue distribution, plasma.

It localises to the secreted. Functionally, binds water, Ca(2+), Na(+), K(+), fatty acids, hormones, bilirubin and drugs. Its main function is the regulation of the colloidal osmotic pressure of blood. This Salmo salar (Atlantic salmon) protein is Albumin 1 (alb1).